A 401-amino-acid chain; its full sequence is Probable tRNA sulfurtransferase (401 aa).

Positions 60 to 165 (EPISEQLKGV…EQATYITFKD (106 aa)) constitute a THUMP domain. Residues 183 to 184 (ML), 208 to 209 (HF), R265, G287, and Q296 contribute to the ATP site.

The protein belongs to the ThiI family.

The protein resides in the cytoplasm. The enzyme catalyses [ThiI sulfur-carrier protein]-S-sulfanyl-L-cysteine + a uridine in tRNA + 2 reduced [2Fe-2S]-[ferredoxin] + ATP + H(+) = [ThiI sulfur-carrier protein]-L-cysteine + a 4-thiouridine in tRNA + 2 oxidized [2Fe-2S]-[ferredoxin] + AMP + diphosphate. The catalysed reaction is [ThiS sulfur-carrier protein]-C-terminal Gly-Gly-AMP + S-sulfanyl-L-cysteinyl-[cysteine desulfurase] + AH2 = [ThiS sulfur-carrier protein]-C-terminal-Gly-aminoethanethioate + L-cysteinyl-[cysteine desulfurase] + A + AMP + 2 H(+). Its pathway is cofactor biosynthesis; thiamine diphosphate biosynthesis. In terms of biological role, catalyzes the ATP-dependent transfer of a sulfur to tRNA to produce 4-thiouridine in position 8 of tRNAs, which functions as a near-UV photosensor. Also catalyzes the transfer of sulfur to the sulfur carrier protein ThiS, forming ThiS-thiocarboxylate. This is a step in the synthesis of thiazole, in the thiamine biosynthesis pathway. The sulfur is donated as persulfide by IscS. In Bacillus pumilus (strain SAFR-032), this protein is Probable tRNA sulfurtransferase.